The chain runs to 387 residues: Sedoheptulose-1,7-bisphosphatase, chloroplastic (387 aa).

C109 and C114 are joined by a disulfide. The Mg(2+) site is built by D120, E149, D170, L172, and D173. Residues 173–176 (DGSS), Y284, and K314 each bind substrate. A Mg(2+)-binding site is contributed by E320.

The protein belongs to the FBPase class 1 family. In terms of assembly, homodimer. It depends on Mg(2+) as a cofactor.

Its subcellular location is the plastid. The protein resides in the chloroplast. The enzyme catalyses D-sedoheptulose 1,7-bisphosphate + H2O = D-sedoheptulose 7-phosphate + phosphate. It functions in the pathway carbohydrate biosynthesis; Calvin cycle. This chain is Sedoheptulose-1,7-bisphosphatase, chloroplastic, found in Spinacia oleracea (Spinach).